We begin with the raw amino-acid sequence, 556 residues long: 2-succinyl-5-enolpyruvyl-6-hydroxy-3-cyclohexene-1-carboxylate synthase (556 aa).

This sequence belongs to the TPP enzyme family. MenD subfamily. Homodimer. The cofactor is Mg(2+). It depends on Mn(2+) as a cofactor. Thiamine diphosphate is required as a cofactor.

It catalyses the reaction isochorismate + 2-oxoglutarate + H(+) = 5-enolpyruvoyl-6-hydroxy-2-succinyl-cyclohex-3-ene-1-carboxylate + CO2. It participates in quinol/quinone metabolism; 1,4-dihydroxy-2-naphthoate biosynthesis; 1,4-dihydroxy-2-naphthoate from chorismate: step 2/7. The protein operates within quinol/quinone metabolism; menaquinone biosynthesis. Catalyzes the thiamine diphosphate-dependent decarboxylation of 2-oxoglutarate and the subsequent addition of the resulting succinic semialdehyde-thiamine pyrophosphate anion to isochorismate to yield 2-succinyl-5-enolpyruvyl-6-hydroxy-3-cyclohexene-1-carboxylate (SEPHCHC). The polypeptide is 2-succinyl-5-enolpyruvyl-6-hydroxy-3-cyclohexene-1-carboxylate synthase (Salmonella paratyphi B (strain ATCC BAA-1250 / SPB7)).